The sequence spans 199 residues: Auxin-responsive protein IAA1 (199 aa).

Positions 25–29 match the EAR-like (transcriptional repression) motif; it reads LTLRL. The disordered stretch occupies residues 31–74; that stretch reads GSLAAAAAPDPDRKRSSPSSSDAADAADNSSPLAAAADAPPAPK. The span at 47 to 69 shows a compositional bias: low complexity; that stretch reads SPSSSDAADAADNSSPLAAAADA. Residues 93-187 enclose the PB1 domain; sequence AKFVKVAVDG…TCQRLRLMKS (95 aa).

This sequence belongs to the Aux/IAA family. Homodimers and heterodimers. As to expression, highly expressed in flowers. Expressed at low levels in roots and shoots.

The protein resides in the nucleus. Functionally, aux/IAA proteins are short-lived transcriptional factors that function as repressors of early auxin response genes at low auxin concentrations. The protein is Auxin-responsive protein IAA1 (IAA1) of Oryza sativa subsp. japonica (Rice).